The sequence spans 57 residues: Large ribosomal subunit protein bL32 (57 aa).

The disordered stretch occupies residues 1 to 22 (MAVPKKKTSKSKRDKRRATWRH).

This sequence belongs to the bacterial ribosomal protein bL32 family.

The sequence is that of Large ribosomal subunit protein bL32 from Nostoc punctiforme (strain ATCC 29133 / PCC 73102).